Here is a 165-residue protein sequence, read N- to C-terminus: HTH-type transcriptional regulator IscR (165 aa).

The 130-residue stretch at 2-131 folds into the HTH rrf2-type domain; that stretch reads RLTSKGRYAV…NNITLAELVS (130 aa). The segment at residues 28-51 is a DNA-binding region (H-T-H motif); that stretch reads LAEISERQGISLSYLEQLFSRLRK. Residues Cys92, Cys98, and Cys104 each contribute to the [2Fe-2S] cluster site. The tract at residues 144 to 165 is disordered; that stretch reads NDTRRPLTNGRPQETINVNLHA. Residues 153-165 are compositionally biased toward polar residues; that stretch reads GRPQETINVNLHA.

Requires [2Fe-2S] cluster as cofactor.

Regulates the transcription of several operons and genes involved in the biogenesis of Fe-S clusters and Fe-S-containing proteins. The polypeptide is HTH-type transcriptional regulator IscR (Sodalis glossinidius (strain morsitans)).